The following is a 1122-amino-acid chain: Breast carcinoma-amplified sequence 3 homolog (1122 aa).

The interval 1 to 41 (MSADSPRRHPSGVVGSGIGLGSGSGTGLGSGSTGGSKSGAA) is disordered. The span at 14–37 (VGSGIGLGSGSGTGLGSGSTGGSK) shows a compositional bias: gly residues. At S55 the chain carries Phosphoserine. Low complexity-rich tracts occupy residues 357-377 (GTTAGSGASSKSSSFDSASGG), 626-641 (GSNSQRQRQRLSSLSD), 966-987 (TKDNASPNPNTNTNPNAIPSSN), and 1036-1051 (LSLEGPPSQSSPPLSL). 5 disordered regions span residues 357–382 (GTTAGSGASSKSSSFDSASGGPDAKQ), 620–644 (GVGVGVGSNSQRQRQRLSSLSDDSG), 966–990 (TKDNASPNPNTNTNPNAIPSSNKVQ), 1033–1054 (NSRLSLEGPPSQSSPPLSLTNG), and 1071–1122 (GVAQ…RRNL). S638 carries the phosphoserine modification. Residues 1087–1112 (VDDDDEEEEEEEEELDEEAEPDDDER) are compositionally biased toward acidic residues. Basic and acidic residues predominate over residues 1113–1122 (EDRPLGRRNL).

The protein belongs to the BCAS3 family. Expressed in all postembryonic pericardial cells, but not in cardioblasts. Also expressed in Garland cells in third instar larvae (at protein level).

The protein localises to the cytoplasm. Its function is as follows. Regulates macropinocytosis in pericardial cells. This chain is Breast carcinoma-amplified sequence 3 homolog (rudhira), found in Drosophila melanogaster (Fruit fly).